The following is a 469-amino-acid chain: Probable ribonuclease FAU-1 (469 aa).

Belongs to the FAU-1 family.

Functionally, probable RNase involved in rRNA stability through maturation and/or degradation of precursor rRNAs. Binds to RNA in loop regions with AU-rich sequences. This chain is Probable ribonuclease FAU-1, found in Ignicoccus hospitalis (strain KIN4/I / DSM 18386 / JCM 14125).